We begin with the raw amino-acid sequence, 276 residues long: uncharacterized protein (276 aa).

Residues methionine 1–glycine 4 constitute a propeptide, leader sequence. Residue methionine 5 is modified to N-methylmethionine. Residues methionine 5–tyrosine 26 form a helical membrane-spanning segment.

The protein resides in the membrane. This is an uncharacterized protein from Aquifex aeolicus (strain VF5).